Reading from the N-terminus, the 294-residue chain is Eukaryotic translation initiation factor 3 subunit F (294 aa).

Residues 7 to 155 enclose the MPN domain; it reads VNVHPGVYMN…VRAYLRSKAG (149 aa).

The protein belongs to the eIF-3 subunit F family. As to quaternary structure, component of the eukaryotic translation initiation factor 3 (eIF-3) complex.

It localises to the cytoplasm. Component of the eukaryotic translation initiation factor 3 (eIF-3) complex, which is involved in protein synthesis of a specialized repertoire of mRNAs and, together with other initiation factors, stimulates binding of mRNA and methionyl-tRNAi to the 40S ribosome. The eIF-3 complex specifically targets and initiates translation of a subset of mRNAs involved in cell proliferation. This is Eukaryotic translation initiation factor 3 subunit F from Caenorhabditis elegans.